Consider the following 250-residue polypeptide: Large ribosomal subunit protein uL13c (250 aa).

Residues 1 to 47 (MATMACASSLTFPSAQTQKSFFGTNVKQTPVLSFPRPTVAAAVAVSA) constitute a chloroplast transit peptide.

In terms of assembly, component of the chloroplast large ribosomal subunit (LSU). Mature 70S chloroplast ribosomes of higher plants consist of a small (30S) and a large (50S) subunit. The 30S small subunit contains 1 molecule of ribosomal RNA (16S rRNA) and 24 different proteins. The 50S large subunit contains 3 rRNA molecules (23S, 5S and 4.5S rRNA) and 33 different proteins.

The protein localises to the plastid. It is found in the chloroplast. In terms of biological role, component of the chloroplast ribosome (chloro-ribosome), a dedicated translation machinery responsible for the synthesis of chloroplast genome-encoded proteins, including proteins of the transcription and translation machinery and components of the photosynthetic apparatus. The sequence is that of Large ribosomal subunit protein uL13c (RPL13) from Spinacia oleracea (Spinach).